Consider the following 261-residue polypeptide: uncharacterized protein (261 aa).

The protein belongs to the PaiB family.

This is an uncharacterized protein from Aspergillus fumigatus (strain ATCC MYA-4609 / CBS 101355 / FGSC A1100 / Af293) (Neosartorya fumigata).